The chain runs to 837 residues: Protein translocase subunit SecA 1 (837 aa).

ATP-binding positions include glutamine 85, 103-107, and aspartate 493; that span reads GEGKT. 4 residues coordinate Zn(2+): cysteine 821, cysteine 823, cysteine 832, and histidine 833.

This sequence belongs to the SecA family. Monomer and homodimer. Part of the essential Sec protein translocation apparatus which comprises SecA, SecYEG and auxiliary proteins SecDF. Other proteins may also be involved. Requires Zn(2+) as cofactor.

Its subcellular location is the cell membrane. It is found in the cytoplasm. The enzyme catalyses ATP + H2O + cellular proteinSide 1 = ADP + phosphate + cellular proteinSide 2.. Its function is as follows. Part of the Sec protein translocase complex. Interacts with the SecYEG preprotein conducting channel. Has a central role in coupling the hydrolysis of ATP to the transfer of proteins into and across the cell membrane, serving as an ATP-driven molecular motor driving the stepwise translocation of polypeptide chains across the membrane. The chain is Protein translocase subunit SecA 1 from Streptococcus pneumoniae serotype 4 (strain ATCC BAA-334 / TIGR4).